A 612-amino-acid polypeptide reads, in one-letter code: MFS siderochrome iron transporter B (612 aa).

Over 1 to 86 the chain is Cytoplasmic; the sequence is MLHVLSVGPS…GAQAGVKKIE (86 aa). The disordered stretch occupies residues 55–78; the sequence is DKEAAHAPANAETNNEEANPSDGA. Residues 60–72 are compositionally biased toward low complexity; the sequence is HAPANAETNNEEA. A helical transmembrane segment spans residues 87–104; sequence AVTLSWTRGTAIWFLTLV. Topologically, residues 105–127 are extracellular; the sequence is NDFRLSMYTSLNAYATSSFLGHS. A helical membrane pass occupies residues 128–148; the sequence is LLTVINIVSYVMGGSVYIPMA. Residues 149-156 are Cytoplasmic-facing; that stretch reads KALDLWGR. Residues 157 to 177 traverse the membrane as a helical segment; the sequence is AEGFLLMTFFCILGLILLASS. At 178–187 the chain is on the extracellular side; the sequence is QNLPTYCAGQ. Residues 188 to 208 traverse the membrane as a helical segment; sequence VFYKVGFGGLSYTWNVLAADV. Residues 209–215 lie on the Cytoplasmic side of the membrane; the sequence is TNLRNRG. A helical transmembrane segment spans residues 216–236; the sequence is LAFAFTSSPALISAFAGSKAA. Over 237 to 246 the chain is Extracellular; that stretch reads SDLLAHSTWR. A helical transmembrane segment spans residues 247–267; sequence WGFGMWAIILPVVALPIYGLL. The Cytoplasmic segment spans residues 268-302; it reads AYHLRQAEKKGVLVKETRDWSITPKTVWWAIMEFD. A helical transmembrane segment spans residues 303–323; it reads LPGVLLFAGGFVIFLLPFTLA. The Extracellular portion of the chain corresponds to 324–334; the sequence is ATAPHGYQTDY. A helical membrane pass occupies residues 335–355; sequence IIAMITLGLALIIAFGFYEML. Residues 356–370 are Cytoplasmic-facing; that stretch reads VAPVPFLNYKFLIDR. Residues 371 to 393 form a helical membrane-spanning segment; the sequence is TVLGACLLDMTYQVSYYCYASYL. Topologically, residues 394-409 are extracellular; that stretch reads PSFLQVVYELDVATAG. The helical transmembrane segment at 410–430 threads the bilayer; it reads YVTNTFSVVSFVFLFFAGWLI. Residues 431 to 435 lie on the Cytoplasmic side of the membrane; sequence RWTGR. The helical transmembrane segment at 436–456 threads the bilayer; it reads FKWILWVCVPLYIFGLGLMIH. The Extracellular segment spans residues 457 to 463; it reads FRQPGGY. The chain crosses the membrane as a helical span at residues 464-484; it reads IGYIVMCEIFFSVAGSVFILC. At 485-498 the chain is on the cytoplasmic side; that stretch reads VQLAVLASVDHQHV. A helical membrane pass occupies residues 499 to 519; the sequence is AAVLALLFVMGSIGGSIGSAI. The Extracellular segment spans residues 520 to 575; it reads CGAIWTSTFLSRLERNLPASAMPDLSLIYSSLPTQLSYPVGSATRTAIVEAYGYAQ. The helical transmembrane segment at 576–596 threads the bilayer; sequence ARMLIAGTAFMVLGFIWVGMM. Over 597–612 the chain is Cytoplasmic; it reads RNLNVKNMTQTKGNVV.

The protein belongs to the major facilitator superfamily.

Its subcellular location is the cell tip. It localises to the cytoplasmic vesicle membrane. The protein resides in the cell membrane. Major facilitator transporter involved in triacetylfusarinine C (TAFC) uptake. Can also transport ferricrocin and coprogen, but not ferrichrysin. MirB plays a crucial role for virulence in a murine model of pulmonary aspergillosis, indicating that TAFC-mediated iron uptake plays a dominant role during infection. This is MFS siderochrome iron transporter B from Aspergillus fumigatus (strain ATCC MYA-4609 / CBS 101355 / FGSC A1100 / Af293) (Neosartorya fumigata).